A 358-amino-acid polypeptide reads, in one-letter code: Na(+)/H(+) exchange regulatory cofactor NHE-RF1 (358 aa).

S2 is modified (N-acetylserine). A phosphoserine mark is found at S2 and S46. Positions L14 to E94 constitute a PDZ 1 domain. Low complexity predominate over residues Q114–G132. The tract at residues Q114 to G192 is disordered. A compositionally biased stretch (basic and acidic residues) spans N135–P152. A PDZ 2 domain is found at L154–E234. Residues S162, S269, S280, S290, and S291 each carry the phosphoserine modification. A disordered region spans residues A277–L358. Residues S288–Q306 are compositionally biased toward polar residues. The residue at position 293 (T293) is a Phosphothreonine. Phosphoserine occurs at positions 294, 299, and 302. Over residues D307 to P319 the composition is skewed to low complexity. The segment covering W348–L358 has biased composition (basic and acidic residues).

In terms of assembly, homodimer, and heterodimer with NHERF2. Binds the N-termini of EZR, RDX and MSN. Binds the C-termini of PDGFRA, PDGFRB, ADRB2, NOS2 and CFTR. Binds ARHGAP17, EPI64, RACK1, OPRK1, GNAQ, CTNNB1 and PLCB3. Binds PDZK1. Interacts with CLCN3. Binds the C-terminus of PAG1. In resting T-cells, part of a PAG1-NHERF1-MSN complex which is disrupted upon TCR activation. Forms a complex with CFTR and SLC4A7. Forms a complex with SLC4A7 and ATP6V1B1. Interacts with TRPC4 (via the PDZ-binding domain). Directly interacts with HTR4. Interacts (via the PDZ 1 domain) with PODXL (via the C-terminal PDZ-binding motif DTHL); interaction is not detected in glomerular epithelium cells. Interacts (via the PDZ 1 domain) with PODXL (via the C-terminal PDZ-binding motif DTHL); the interaction take place early in the secretory pathway and is necessary for its apical membrane sorting. Interacts with SLC26A3. Interacts with MCC. Interacts with SLC34A1. Interacts (via the PDZ domains) with SLC26A6 isoform 4 and isoform 5. Interacts (via PDZ domains) with ACE2 (via PDZ-binding motif); the interaction may enhance ACE2 membrane residence. Post-translationally, phosphorylated on serine residues. Detected in liver, kidney, pancreas, prostate, spleen, small intestine and placenta, in particular in the syncytiotrophoblast.

It localises to the cytoplasm. The protein resides in the apical cell membrane. It is found in the endomembrane system. The protein localises to the cell projection. Its subcellular location is the filopodium. It localises to the ruffle. The protein resides in the microvillus. Functionally, scaffold protein that connects plasma membrane proteins with members of the ezrin/moesin/radixin family and thereby helps to link them to the actin cytoskeleton and to regulate their surface expression. Necessary for recycling of internalized ADRB2. Was first known to play a role in the regulation of the activity and subcellular location of SLC9A3. Necessary for cAMP-mediated phosphorylation and inhibition of SLC9A3. May enhance Wnt signaling. May participate in HTR4 targeting to microvilli. Involved in the regulation of phosphate reabsorption in the renal proximal tubules. Involved in sperm capacitation. May participate in the regulation of the chloride and bicarbonate homeostasis in spermatozoa. In Homo sapiens (Human), this protein is Na(+)/H(+) exchange regulatory cofactor NHE-RF1.